We begin with the raw amino-acid sequence, 173 residues long: dCTP deaminase, dUMP-forming (173 aa).

Residues 93–98, D111, 119–121, and Q138 each bind dCTP; these read RSSIGR and TLE. Catalysis depends on E121, which acts as the Proton donor/acceptor.

This sequence belongs to the dCTP deaminase family. As to quaternary structure, homotrimer.

The enzyme catalyses dCTP + 2 H2O = dUMP + NH4(+) + diphosphate. The protein operates within pyrimidine metabolism; dUMP biosynthesis; dUMP from dCTP: step 1/1. Bifunctional enzyme that catalyzes both the deamination of dCTP to dUTP and the hydrolysis of dUTP to dUMP without releasing the toxic dUTP intermediate. The protein is dCTP deaminase, dUMP-forming of Leptospira borgpetersenii serovar Hardjo-bovis (strain JB197).